The sequence spans 426 residues: Probable inactive metalloprotease YmfF (426 aa).

Zn(2+) contacts are provided by H50 and E138.

The protein belongs to the peptidase M16 family.

The chain is Probable inactive metalloprotease YmfF (ymfF) from Bacillus subtilis (strain 168).